We begin with the raw amino-acid sequence, 394 residues long: Queuine tRNA-ribosyltransferase (394 aa).

The active-site Proton acceptor is the Asp-95. Substrate-binding positions include 95–99 (DSGGF), Asp-149, Gln-190, and Gly-217. Residues 248-254 (GVGTPID) form an RNA binding region. Catalysis depends on Asp-267, which acts as the Nucleophile. Residues 272-276 (TRNAR) are RNA binding; important for wobble base 34 recognition. 4 residues coordinate Zn(2+): Cys-305, Cys-307, Cys-310, and His-337. Residues 375 to 394 (NDANETVGATESTESTESTE) are disordered.

This sequence belongs to the queuine tRNA-ribosyltransferase family. In terms of assembly, homodimer. Within each dimer, one monomer is responsible for RNA recognition and catalysis, while the other monomer binds to the replacement base PreQ1. Requires Zn(2+) as cofactor.

It catalyses the reaction 7-aminomethyl-7-carbaguanine + guanosine(34) in tRNA = 7-aminomethyl-7-carbaguanosine(34) in tRNA + guanine. It participates in tRNA modification; tRNA-queuosine biosynthesis. Catalyzes the base-exchange of a guanine (G) residue with the queuine precursor 7-aminomethyl-7-deazaguanine (PreQ1) at position 34 (anticodon wobble position) in tRNAs with GU(N) anticodons (tRNA-Asp, -Asn, -His and -Tyr). Catalysis occurs through a double-displacement mechanism. The nucleophile active site attacks the C1' of nucleotide 34 to detach the guanine base from the RNA, forming a covalent enzyme-RNA intermediate. The proton acceptor active site deprotonates the incoming PreQ1, allowing a nucleophilic attack on the C1' of the ribose to form the product. After dissociation, two additional enzymatic reactions on the tRNA convert PreQ1 to queuine (Q), resulting in the hypermodified nucleoside queuosine (7-(((4,5-cis-dihydroxy-2-cyclopenten-1-yl)amino)methyl)-7-deazaguanosine). This chain is Queuine tRNA-ribosyltransferase, found in Sorangium cellulosum (strain So ce56) (Polyangium cellulosum (strain So ce56)).